Reading from the N-terminus, the 552-residue chain is MATATVATTPEGIPVIILKEGSSRTYGKEALRANIAAVKAIEEALKSTYGPRGMDKMLVDSLGDITITNDGATILDKMDLQHPTGKLLVQIAKGQDEETADGTKTAVILAGELAKKAEDLLYKEIHPTIIVSGYKKAEEIALKTIQDIAQPVSINDTDVLRKVALTSLGSKAVAGAREYLADLVVKAVAQVAELRGDKWYVDLDNVQIVKKHGGSINDTQLVYGIVVDKEVVHPGMPKRIENAKIALLDASLEVEKPELDAEIRINDPTQMHKFLEEEENILKEKVDKIAATGANVVICQKGIDEVAQHYLAKKGILAVRRAKKSDLEKLARATGGRVISNIDELTSQDLGYAALVEERKVGEDKMVFVEGAKNPKSVSILIRGGLERVVDETERALRDALGTVADVIRDGRAVAGGGAVEIEIAKRLRKYAPQVGGKEQLAIEAYANAIEGLIMILAENAGLDPIDKLMQLRSLHENETNKWYGLNLFTGNPEDMWKLGVIEPALVKMNAIKAATEAVTLVLRIDDIVAAGKKGGSEPGGKKEKEEKSSED.

A disordered region spans residues 531-552 (AGKKGGSEPGGKKEKEEKSSED). Positions 540-552 (GGKKEKEEKSSED) are enriched in basic and acidic residues.

Belongs to the TCP-1 chaperonin family. As to quaternary structure, forms a heterooligomeric complex of two stacked nine-membered rings; one of alpha and the other of beta subunits. Sometimes called a 'rosettasome'.

It localises to the cytoplasm. The catalysed reaction is ATP + H2O = ADP + phosphate + H(+). Functionally, molecular chaperone; binds unfolded polypeptides in vitro, stimulates protein folding and has ATPase activity. One of the most abundant proteins in the cell at all temperatures. This is Thermosome subunit beta (thsB) from Saccharolobus shibatae (strain ATCC 51178 / DSM 5389 / JCM 8931 / NBRC 15437 / B12) (Sulfolobus shibatae).